The chain runs to 323 residues: Cyclin-H (323 aa).

At serine 5 the chain carries Phosphoserine; by CDK8. The residue at position 132 (serine 132) is a Phosphoserine. Residues 297–323 (YEDDDYVSKKSKHEEEEWTDDDLVESL) are disordered. Over residues 302–311 (YVSKKSKHEE) the composition is skewed to basic and acidic residues. Serine 304 carries the phosphoserine; by CDK8 modification. Residues 312–323 (EEWTDDDLVESL) are compositionally biased toward acidic residues. Phosphothreonine is present on threonine 315. A Phosphoserine modification is found at serine 322.

Belongs to the cyclin family. Cyclin C subfamily. As to quaternary structure, associates primarily with CDK7 and MAT1 to form the CAK complex. CAK can further associate with the core-TFIIH to form the TFIIH basal transcription factor.

It is found in the nucleus. Its function is as follows. Regulates CDK7, the catalytic subunit of the CDK-activating kinase (CAK) enzymatic complex. CAK activates the cyclin-associated kinases CDK1, CDK2, CDK4 and CDK6 by threonine phosphorylation. CAK complexed to the core-TFIIH basal transcription factor activates RNA polymerase II by serine phosphorylation of the repetitive C-terminal domain (CTD) of its large subunit (POLR2A), allowing its escape from the promoter and elongation of the transcripts. Involved in cell cycle control and in RNA transcription by RNA polymerase II. Its expression and activity are constant throughout the cell cycle. The protein is Cyclin-H (CCNH) of Homo sapiens (Human).